The primary structure comprises 220 residues: Endonuclease NucS (220 aa).

It belongs to the NucS endonuclease family.

It is found in the cytoplasm. Functionally, cleaves both 3' and 5' ssDNA extremities of branched DNA structures. The chain is Endonuclease NucS from Frankia alni (strain DSM 45986 / CECT 9034 / ACN14a).